The primary structure comprises 424 residues: Inhibin beta A chain (424 aa).

An N-terminal signal peptide occupies residues 1-20 (MPLLWLRGFLLASCWIIVRS). Residues 21–308 (SPTPGSGGHS…EEHPHRRRRR (288 aa)) constitute a propeptide that is removed on maturation. A glycan (N-linked (GlcNAc...) asparagine) is linked at asparagine 165. Disordered stretches follow at residues 178 to 197 (QQRRPQGSADAGEEAEDVGF) and 259 to 306 (KKKK…HRRR). Over residues 188–197 (AGEEAEDVGF) the composition is skewed to acidic residues. The span at 263 to 275 (KEEEAEGRKRDGE) shows a compositional bias: basic and acidic residues. 4 cysteine pairs are disulfide-bonded: cysteine 312–cysteine 320, cysteine 319–cysteine 389, cysteine 348–cysteine 421, and cysteine 352–cysteine 423.

The protein belongs to the TGF-beta family. In terms of assembly, dimeric, linked by one or more disulfide bonds. Inhibin A is a dimer of alpha/INHA and beta-A/INHBA. Activin A is a homodimer of beta-A/INHBA. Activin AB is a dimer of beta-A/INHBA and beta-B/INHBB. Interacts with FST and FSTL3; these interactions prevent activin A interaction to its type II receptor. Activin A interacts with ACVR2A. Activin A interacts with BMPR2. Inhibin A interacts with ACVR1; this interaction creates a non-signaling complex (NSC) that inhibits ACVR1-mediated BMP signaling. Inhibin A interacts with ACVR2A.

It localises to the secreted. Functionally, inhibins/activins are involved in regulating a number of diverse functions such as hypothalamic and pituitary hormone secretion, gonadal hormone secretion, germ cell development and maturation, erythroid differentiation, insulin secretion, nerve cell survival, embryonic axial development or bone growth, depending on their subunit composition. In terms of biological role, activin A is a homodimer of INHBA that plays a role in several essential biological processes including embryonic development, stem cell maintenance and differentiation, haematopoiesis, cell proliferation and tissue fibrosis. Signals through type I (such as ACVR1B or ACVR1C) and type II receptors (such as ACVR2A, ACVR2B or BMPR2) which, upon ligand binding, phosphorylate SMAD2 and SMAD3 intracellular signaling mediators that form a complex with SMAD4, translocate to the nucleus and modulate gene expression. Can also activate alternative non-canonical intracellular signaling pathways including the p38 MAPK, extracellular signal-regulated kinases 1/2 (ERK1/2) and c-Jun N-terminal kinases (JNKs) to modulate cell migration and differentiation. Alternatively, promotes osteoblastic differentiation via ACVRL1-SMAD1/5/9 pathway. In addition, can engage the type I receptor ACVR1 to form an ACVR1-activin A-type II receptor non-signaling complex (NSC) that renders receptors unavailable for engagement with BMPs, hence resulting in an apparent inhibition of ACVR1-mediated BMP signaling. Its function is as follows. Inhibin A is a dimer of alpha/INHA and beta-A/INHBA that functions as a feedback regulator in the hypothalamic-pituitary-gonadal (HPG) axis. Inhibits the secretion of FSH from the anterior pituitary gland by acting on pituitary gonadotrope cells. Antagonizes activin A by binding to the proteoglycan, betaglycan, and forming a stable complex with and, thereby, sequestering type II activin receptors while excluding type I receptor. The polypeptide is Inhibin beta A chain (INHBA) (Sus scrofa (Pig)).